The chain runs to 480 residues: tRNA-2-methylthio-N(6)-dimethylallyladenosine synthase (480 aa).

An MTTase N-terminal domain is found at 31-151 (RGLHVITWGC…LPEMVARAAR (121 aa)). [4Fe-4S] cluster contacts are provided by C40, C76, C114, C192, C196, and C199. Residues 178–410 (SPGGITSFLT…QALLRTQQDA (233 aa)) form the Radical SAM core domain. The TRAM domain maps to 413 to 475 (DGTVGHVVPV…TNSLSGTLVQ (63 aa)).

Belongs to the methylthiotransferase family. MiaB subfamily. In terms of assembly, monomer. It depends on [4Fe-4S] cluster as a cofactor.

It localises to the cytoplasm. It carries out the reaction N(6)-dimethylallyladenosine(37) in tRNA + (sulfur carrier)-SH + AH2 + 2 S-adenosyl-L-methionine = 2-methylsulfanyl-N(6)-dimethylallyladenosine(37) in tRNA + (sulfur carrier)-H + 5'-deoxyadenosine + L-methionine + A + S-adenosyl-L-homocysteine + 2 H(+). Functionally, catalyzes the methylthiolation of N6-(dimethylallyl)adenosine (i(6)A), leading to the formation of 2-methylthio-N6-(dimethylallyl)adenosine (ms(2)i(6)A) at position 37 in tRNAs that read codons beginning with uridine. This Gluconacetobacter diazotrophicus (strain ATCC 49037 / DSM 5601 / CCUG 37298 / CIP 103539 / LMG 7603 / PAl5) protein is tRNA-2-methylthio-N(6)-dimethylallyladenosine synthase.